The primary structure comprises 415 residues: L-cysteine:1D-myo-inositol 2-amino-2-deoxy-alpha-D-glucopyranoside ligase (415 aa).

Cys43 provides a ligand contact to Zn(2+). L-cysteinyl-5'-AMP is bound by residues 43-46, Thr58, and 81-83; these read CGIT and NIT. The 'HIGH' region motif lies at 45-55; it reads ITPYDATHLGH. The 'ERGGDP' region motif lies at 187-192; the sequence is ERGGDP. L-cysteinyl-5'-AMP is bound at residue Trp227. Cys231 contacts Zn(2+). 249–251 is a binding site for L-cysteinyl-5'-AMP; the sequence is GSD. Zn(2+) is bound at residue His256. An L-cysteinyl-5'-AMP-binding site is contributed by Ile283. A 'KMSKS' region motif is present at residues 289–293; it reads KMSKS.

This sequence belongs to the class-I aminoacyl-tRNA synthetase family. MshC subfamily. As to quaternary structure, monomer. It depends on Zn(2+) as a cofactor.

It catalyses the reaction 1D-myo-inositol 2-amino-2-deoxy-alpha-D-glucopyranoside + L-cysteine + ATP = 1D-myo-inositol 2-(L-cysteinylamino)-2-deoxy-alpha-D-glucopyranoside + AMP + diphosphate + H(+). Functionally, catalyzes the ATP-dependent condensation of GlcN-Ins and L-cysteine to form L-Cys-GlcN-Ins. This is L-cysteine:1D-myo-inositol 2-amino-2-deoxy-alpha-D-glucopyranoside ligase from Mycobacterium sp. (strain JLS).